Here is a 365-residue protein sequence, read N- to C-terminus: Peptide chain release factor 2 (365 aa).

Position 252 is an N5-methylglutamine (glutamine 252).

The protein belongs to the prokaryotic/mitochondrial release factor family. Methylated by PrmC. Methylation increases the termination efficiency of RF2.

The protein resides in the cytoplasm. Functionally, peptide chain release factor 2 directs the termination of translation in response to the peptide chain termination codons UGA and UAA. The protein is Peptide chain release factor 2 of Yersinia enterocolitica serotype O:8 / biotype 1B (strain NCTC 13174 / 8081).